Reading from the N-terminus, the 427-residue chain is MSAIVDIIGREILDSRGNPTVECDVLLESGTMGRAAVPSGASTGSREAIELRDGEAGRYGGKGVLKAVEHINTEISEAIMGLDASEQAFLDKTLLELDGTDNKSRLGANAMLAVSMAVAKAAAEEAGLPLYRYFGGSGAMQLPVPMMNIVNGGAHANNSLDIQEFMIVPVSQPTFREALRCGAEVFHALKKILSDRGMSTAVGDEGGFAPNFGSNDECLSTILQAIEKAGYRAGEDVLLALDCAASEFYHDGKYQLAGEGLQLSSAEFADYLATLADKFPIVSIEDGMHEGDWEGWKLLTDKLGKKIQLVGDDLFVTNTRILKEGIEKGIANSILIKINQIGTLTETFAAIEMAKRAGYTAVISHRSGETEDSTIADIAVGLNAGQIKTGSLSRSDRISKYNQLLRIEEDLGDIASYPGKSAFYNLR.

Gln-163 serves as a coordination point for (2R)-2-phosphoglycerate. Glu-205 acts as the Proton donor in catalysis. 3 residues coordinate Mg(2+): Asp-242, Glu-285, and Asp-312. (2R)-2-phosphoglycerate is bound by residues Lys-337, Arg-366, Ser-367, and Lys-388. Catalysis depends on Lys-337, which acts as the Proton acceptor.

Belongs to the enolase family. It depends on Mg(2+) as a cofactor.

The protein localises to the cytoplasm. It localises to the secreted. It is found in the cell surface. It catalyses the reaction (2R)-2-phosphoglycerate = phosphoenolpyruvate + H2O. The protein operates within carbohydrate degradation; glycolysis; pyruvate from D-glyceraldehyde 3-phosphate: step 4/5. Its function is as follows. Catalyzes the reversible conversion of 2-phosphoglycerate (2-PG) into phosphoenolpyruvate (PEP). It is essential for the degradation of carbohydrates via glycolysis. This chain is Enolase, found in Paraburkholderia phymatum (strain DSM 17167 / CIP 108236 / LMG 21445 / STM815) (Burkholderia phymatum).